Reading from the N-terminus, the 1029-residue chain is Protein SUPPRESSOR OF PHYA-105 1 (1029 aa).

The tract at residues 42-69 (SETANSDCPGSSAHRNVDLTKPPPPEEA) is disordered. The 342-residue stretch at 188–529 (VQMKTPVSSS…ARDILKSELI (342 aa)) folds into the Protein kinase domain. Residues 194-202 (VSSSNFSQL) and Lys-216 each bind ATP. The tract at residues 213–269 (VVGKNQETPPEFVSDQDLGSKEKKLDISKSPTPHDVLPLKSSPKGNGMVSHGDGNHS) is disordered. The span at 230 to 239 (LGSKEKKLDI) shows a compositional bias: basic and acidic residues. Residue Asp-316 is the Proton acceptor of the active site. Residues 347–392 (EDLNRRRPVVEESSSGGRDSKKRKMDLHLNSPGNQLQATSTGRPFK) are disordered. Residues 377–388 (SPGNQLQATSTG) show a composition bias toward polar residues. The stretch at 557–589 (VQKKKKASKLLQDIQTLEDDIKEAERRYSSNVS) forms a coiled coil. Positions 653–679 (ARSDKTLKDRDRCSENQNENQDMSTKG) are disordered. A compositionally biased stretch (basic and acidic residues) spans 654–666 (RSDKTLKDRDRCS). Positions 667–679 (ENQNENQDMSTKG) are enriched in polar residues. 7 WD repeats span residues 714–753 (NSAS…NESV), 763–803 (VNKS…GFSQ), 806–846 (EHQK…SLGT), 848–888 (WSPA…TPWC), 892–930 (GHEK…SSGL), 932–971 (PGAC…YSYY), and 997–1029 (DNGQ…LKLV). A DWD box motif is present at residues 866 to 881 (LAFGSADYKVYCYDLR).

In terms of assembly, interacts with CO, COP1, HFR1, HY5 and PHYA. Light induces dissociation of the SPA1/COP1 complex. Binds to CRY1 in response to blue light, this interaction prevents SPA1/COP1 complex formation but stimulate CRY2/COP1 complex, and thus avoid COP1-dependent degradation of the transcription factor HY5 by the proteasome and promotes hypocotyl elongation.

Its subcellular location is the nucleus speckle. It localises to the nucleus. The protein localises to the PML body. Its function is as follows. Controls normal photoperiodic flowering and regulates circadian rhythms. Required for suppression of photomorphogenesis in dark-grown seedlings and for normal elongation growth of adult plants. Integral component of the COP1/SPA E3 ubiquitin-protein ligase complex. Involved in HY5, HFR1, LAF1 and CO degradation. The sequence is that of Protein SUPPRESSOR OF PHYA-105 1 (SPA1) from Arabidopsis thaliana (Mouse-ear cress).